The chain runs to 440 residues: GTPase Der (440 aa).

2 consecutive EngA-type G domains span residues 4–168 (PIVA…NPED) and 177–352 (IKVA…NQNA). Residues 10-17 (GRPNVGKS), 57-61 (DTGGI), 120-123 (NKVD), 183-190 (GKPNVGKS), 230-234 (DTAGI), and 295-298 (NKWD) each bind GTP. The 85-residue stretch at 353-437 (MRIPTGALNE…PIRFILREKT (85 aa)) folds into the KH-like domain.

The protein belongs to the TRAFAC class TrmE-Era-EngA-EngB-Septin-like GTPase superfamily. EngA (Der) GTPase family. Associates with the 50S ribosomal subunit.

GTPase that plays an essential role in the late steps of ribosome biogenesis. The protein is GTPase Der of Alkaliphilus oremlandii (strain OhILAs) (Clostridium oremlandii (strain OhILAs)).